A 216-amino-acid chain; its full sequence is MRIILLGAPGAGKGTQAKIIEDKYNIAHISTGDMIRETIKSDSEIGKELKKVLDAGQLVSDEFIIKIVKDRISKDDCKNGFLLDGVPRTIIQAEELDKLGVNIDYIVEVDVKDNLLIERITGRRVHPASGRTYHTKFNPPKVEGKDDITGEDLITRTDDNEDTVRERLSVYHAQTSKLIDFYRNFSSTNTKTPKYIKIDGDQAVDKVSQDIFNQLK.

10–15 (GAGKGT) serves as a coordination point for ATP. Residues 30-59 (STGDMIRETIKSDSEIGKELKKVLDAGQLV) are NMP. AMP contacts are provided by residues Thr-31, Arg-36, 57–59 (QLV), and Gln-92. The interval 122–159 (GRRVHPASGRTYHTKFNPPKVEGKDDITGEDLITRTDD) is LID. ATP contacts are provided by residues Arg-123 and 132 to 133 (TY). The AMP site is built by Arg-156 and Arg-167. Gln-202 contributes to the ATP binding site.

This sequence belongs to the adenylate kinase family. Monomer.

It is found in the cytoplasm. The catalysed reaction is AMP + ATP = 2 ADP. The protein operates within purine metabolism; AMP biosynthesis via salvage pathway; AMP from ADP: step 1/1. Functionally, catalyzes the reversible transfer of the terminal phosphate group between ATP and AMP. Plays an important role in cellular energy homeostasis and in adenine nucleotide metabolism. The protein is Adenylate kinase of Francisella philomiragia subsp. philomiragia (strain ATCC 25017 / CCUG 19701 / FSC 153 / O#319-036).